A 910-amino-acid chain; its full sequence is Epithelial discoidin domain-containing receptor 1 (910 aa).

Positions 1–19 (MGTGTLSSLLLLLLLVTIG) are cleaved as a signal peptide. The Extracellular portion of the chain corresponds to 22–414 (DMKGHFDPAK…VAKAEGSPTA (393 aa)). The F5/8 type C domain maps to 32 to 186 (CRYALGMQDR…VCLRVELYGC (155 aa)). Disulfide bonds link Cys-32–Cys-186 and Cys-75–Cys-178. The DS-like domain stretch occupies residues 193–368 (LSYTAPVGQT…LFSEISFISD (176 aa)). Ca(2+)-binding residues include Asn-212, Gln-231, Asp-234, Val-236, Tyr-254, and Tyr-256. A glycan (N-linked (GlcNAc...) asparagine) is linked at Asn-212. An N-linked (GlcNAc...) asparagine glycan is attached at Asn-261. An intrachain disulfide couples Cys-304 to Cys-349. Ca(2+)-binding residues include Ser-361 and Glu-362. 2 N-linked (GlcNAc...) asparagine glycosylation sites follow: Asn-371 and Asn-391. A helical membrane pass occupies residues 415-435 (ILIGCLVAIILLLLLIIALML). The Cytoplasmic portion of the chain corresponds to 436–910 (WRLHWRRLLS…FLADDALNTV (475 aa)). Residues 467–494 (ILINNRPGPREPPPYQEPRPRGTPTHSA) form a disordered region. The PPxY motif signature appears at 478–481 (PPPY). 3 positions are modified to phosphotyrosine; by autocatalysis: Tyr-481, Tyr-510, and Tyr-517. The region spanning 607 to 902 (LRFKEKLGEG…PPFSQLHRFL (296 aa)) is the Protein kinase domain. Residues 613–621 (LGEGQFGEV) and Lys-652 contribute to the ATP site. Position 737 is a phosphotyrosine; by autocatalysis (Tyr-737). The active-site Proton acceptor is the Asp-763. Phosphotyrosine; by autocatalysis occurs at positions 789, 793, and 794.

It belongs to the protein kinase superfamily. Tyr protein kinase family. Insulin receptor subfamily. Homodimer. Interacts (via PPxY motif) with WWC1 (via WW domains) in a collagen-regulated manner. Forms a tripartite complex with WWC1 and PRKCZ, but predominantly in the absence of collagen. Interacts (tyrosine phosphorylated) with SHC1. Interacts with SRC. Interacts with MYH9. Interacts with CDH1. Interacts with PTPN11. Interacts with NCK2. In terms of processing, autophosphorylated in response to fibrillar collagen binding. In terms of tissue distribution, various embryonic and adult tissues; also proliferative zones of the developing brain; hippocampal neurons.

Its subcellular location is the cell membrane. The catalysed reaction is L-tyrosyl-[protein] + ATP = O-phospho-L-tyrosyl-[protein] + ADP + H(+). Functionally, tyrosine kinase that functions as a cell surface receptor for fibrillar collagen and regulates cell attachment to the extracellular matrix, remodeling of the extracellular matrix, cell migration, differentiation, survival and cell proliferation. Collagen binding triggers a signaling pathway that involves SRC and leads to the activation of MAP kinases. Regulates remodeling of the extracellular matrix by up-regulation of the matrix metalloproteinases MMP2, MMP7 and MMP9, and thereby facilitates cell migration and wound healing. Promotes smooth muscle cell migration, and thereby contributes to arterial wound healing. Also plays a role in tumor cell invasion. Phosphorylates PTPN11. Required for normal blastocyst implantation during pregnancy, for normal mammary gland differentiation and normal lactation. Required for normal ear morphology and normal hearing. The protein is Epithelial discoidin domain-containing receptor 1 (Ddr1) of Rattus norvegicus (Rat).